Here is a 299-residue protein sequence, read N- to C-terminus: 11-beta-hydroxysteroid dehydrogenase-like 4A (299 aa).

The helical; Signal-anchor for type II membrane protein transmembrane segment at 10 to 30 (ILLPIVTVSFLLVFMPFSIFF) threads the bilayer. Residues 54 to 80 (GSSSGIGEHLAYEYARRGAYLTLVARR) and D105 contribute to the NADP(+) site. S184 lines the substrate pocket. Y197 acts as the Proton acceptor in catalysis. NADP(+)-binding positions include 197 to 201 (YAASK) and K201.

The protein belongs to the short-chain dehydrogenases/reductases (SDR) family.

The protein localises to the membrane. This chain is 11-beta-hydroxysteroid dehydrogenase-like 4A (HSD4), found in Arabidopsis thaliana (Mouse-ear cress).